The following is a 125-amino-acid chain: Large ribosomal subunit protein bL12 (125 aa).

This sequence belongs to the bacterial ribosomal protein bL12 family. As to quaternary structure, homodimer. Part of the ribosomal stalk of the 50S ribosomal subunit. Forms a multimeric L10(L12)X complex, where L10 forms an elongated spine to which 2 to 4 L12 dimers bind in a sequential fashion. Binds GTP-bound translation factors.

In terms of biological role, forms part of the ribosomal stalk which helps the ribosome interact with GTP-bound translation factors. Is thus essential for accurate translation. The polypeptide is Large ribosomal subunit protein bL12 (Ruthia magnifica subsp. Calyptogena magnifica).